A 423-amino-acid polypeptide reads, in one-letter code: COUP transcription factor 1 (423 aa).

The disordered stretch occupies residues 1-81 (MAMVVSSWRD…QGPPGSGQSQ (81 aa)). Low complexity predominate over residues 39 to 67 (EQQQQAGSGAPHTPQTPGQPGAPATPGTA). The nuclear receptor DNA-binding region spans 83 to 158 (HIECVVCGDK…VGMRREAVQR (76 aa)). 2 consecutive NR C4-type zinc fingers follow at residues 86-106 (CVVCGDKSSGKHYGQFTCEGC) and 122-146 (CRANRNCPIDQHHRNQCQYCRLKKC). The NR LBD domain maps to 184 to 410 (YLSGYISLLL…TLIRDMLLSG (227 aa)).

This sequence belongs to the nuclear hormone receptor family. NR2 subfamily. In terms of assembly, binds DNA as dimer; homodimer and probable heterodimer with NR2F6. Interacts with GTF2B; this interaction is direct. Interacts with COPS2.

The protein localises to the nucleus. Coup (chicken ovalbumin upstream promoter) transcription factor binds to the ovalbumin promoter and, in conjunction with another protein (S300-II) stimulates initiation of transcription. Binds to both direct repeats and palindromes of the 5'-AGGTCA-3' motif. Represses transcriptional activity of LHCG. In Homo sapiens (Human), this protein is COUP transcription factor 1 (NR2F1).